The following is a 157-amino-acid chain: Endoribonuclease YbeY (157 aa).

Residues histidine 113, histidine 117, and histidine 123 each coordinate Zn(2+).

Belongs to the endoribonuclease YbeY family. Zn(2+) is required as a cofactor.

It localises to the cytoplasm. Functionally, single strand-specific metallo-endoribonuclease involved in late-stage 70S ribosome quality control and in maturation of the 3' terminus of the 16S rRNA. This is Endoribonuclease YbeY from Ehrlichia ruminantium (strain Welgevonden).